We begin with the raw amino-acid sequence, 157 residues long: Endoribonuclease YbeY (157 aa).

Residues His111, His115, and His121 each contribute to the Zn(2+) site.

It belongs to the endoribonuclease YbeY family. Zn(2+) serves as cofactor.

Its subcellular location is the cytoplasm. Its function is as follows. Single strand-specific metallo-endoribonuclease involved in late-stage 70S ribosome quality control and in maturation of the 3' terminus of the 16S rRNA. The polypeptide is Endoribonuclease YbeY (Pseudomonas entomophila (strain L48)).